The sequence spans 288 residues: 2-hydroxy-6-oxononadienedioate/2-hydroxy-6-oxononatrienedioate hydrolase (288 aa).

Histidine 267 serves as the catalytic Proton acceptor.

The protein belongs to the AB hydrolase superfamily. MhpC family. As to quaternary structure, homodimer.

It carries out the reaction (2Z,4E)-2-hydroxy-6-oxonona-2,4-dienedioate + H2O = (2Z)-2-hydroxypenta-2,4-dienoate + succinate + H(+). The enzyme catalyses (2Z,4E,7E)-2-hydroxy-6-oxonona-2,4,7-trienedioate + H2O = (2Z)-2-hydroxypenta-2,4-dienoate + fumarate + H(+). The protein operates within aromatic compound metabolism; 3-phenylpropanoate degradation. Its function is as follows. Catalyzes the cleavage of the C5-C6 bond of 2-hydroxy-6-oxononadienedioate and 2-hydroxy-6-oxononatrienedioate, a dienol ring fission product of the bacterial meta-cleavage pathway for degradation of phenylpropionic acid. This chain is 2-hydroxy-6-oxononadienedioate/2-hydroxy-6-oxononatrienedioate hydrolase, found in Escherichia coli O81 (strain ED1a).